A 93-amino-acid chain; its full sequence is Microcin N immunity protein (93 aa).

The next 3 helical transmembrane spans lie at 3–23, 36–56, and 68–88; these read FLNFAFSPVFFSIMACYFIVW, LSIIIISFLICFIYPWLNYKI, and LFCFLSSLVAVVINLIVYFIL.

The protein belongs to the MceB microcin immunity protein family.

The protein resides in the cell inner membrane. In terms of biological role, probably able to protect the producing cell against microcin N (microcin 24). This Escherichia coli protein is Microcin N immunity protein.